A 434-amino-acid polypeptide reads, in one-letter code: Cysteine proteinase 6 (434 aa).

The signal sequence occupies residues 1–19 (MKVLSALCVLLVSVATAKQ). Residues 20–113 (QLSELQYRNA…SEKVFGGVQA (94 aa)) constitute a propeptide, activation peptide. 2 disulfide bridges follow: Cys-133–Cys-178 and Cys-169–Cys-211. Residue Cys-136 is part of the active site. N-linked (GlcNAc...) asparagine glycosylation is present at Asn-227. Cys-269 and Cys-416 are disulfide-bonded. The active site involves His-276. A disordered region spans residues 285–384 (SGSSGSQSQS…GGNSNSGDYP (100 aa)). Positions 288-347 (SGSQSQSAGSQSQSSNNNWSESSQSQDSNSWSQSSQSQSSQDSNSWSQSSQSQGSNSFTG) are enriched in low complexity. Asn-305 is a glycosylation site (N-linked (GlcNAc...) asparagine). Over residues 348–358 (AGTGSGSGSVS) the composition is skewed to gly residues. A compositionally biased stretch (low complexity) spans 359 to 381 (GSGSASGSSSFSGSSNGGNSNSG). Asn-394 is an active-site residue.

The protein belongs to the peptidase C1 family.

The protein resides in the lysosome. This is Cysteine proteinase 6 (cprF) from Dictyostelium discoideum (Social amoeba).